Reading from the N-terminus, the 364-residue chain is Protein spindle-F (364 aa).

The disordered stretch occupies residues 1–26 (MEASAAKITPMASSMSASGSTNSPSS). The span at 9 to 26 (TPMASSMSASGSTNSPSS) shows a compositional bias: low complexity. Residues 32–114 (ALQVALQTIK…GMVSNENRRL (83 aa)) are a coiled coil. Ser53 carries the phosphoserine modification. Positions 56 to 75 (EENQQLREASSRSEGAPRAN) are disordered. Residues Ser85, Ser172, and Ser202 each carry the phosphoserine modification. A coiled-coil region spans residues 210-243 (AKRCLDGLQELRREAMKQQQELRSVMTLLENRIA). Phosphoserine is present on residues Ser264 and Ser270. The UBZ1-type zinc finger occupies 310–336 (EKTCPMCGKQYSSQVSFNAFREHVEMH). Zn(2+) is bound by residues Cys313 and Cys316. A Phosphoserine modification is found at Ser325. Residues His332 and His336 each coordinate Zn(2+). Position 349 is a phosphoserine (Ser349).

Forms homooligomers. Interacts with the dynein light chain ctp. Interacts (via C-terminus) with IKKepsilon; this leads to phosphorylation of spn-F. Forms ternary complexes with ctp and IKKepsilon; this is required for spn-F redistribution from puncta in larval neurons and for dendrite pruning. Interacts with ctp and IKKepsilon through distinct regions. Interacts (via C-terminus) with jvl. Post-translationally, phosphorylated by IKKepsilon. Phosphorylation is required for spn-F neuronal distribution and dendrite pruning and reduces spn-F homooligomerization. It does not lead to spn-F degradation. As to expression, in pupal bristles, localizes to the bristle tip throughout the elongation period (at protein level).

The protein localises to the cytoplasm. It localises to the cytoskeleton. It is found in the cell projection. The protein resides in the axon. Its subcellular location is the dendrite. The protein localises to the perikaryon. In terms of biological role, plays a role in oocyte axis determination and microtubule organization during oogenesis. Also required for polarized organization of the bristle. Required, with jvl, for activation of the kinase IKKepsilon in the germ line. Also required for localization of IKKepsilon to the distal tip of elongating bristles by acting as an adapter linking IKKepsilon and cytoplasmic dynein. Involved in dendrite pruning in larval sensory neurons during metamorphosis. This is Protein spindle-F from Drosophila melanogaster (Fruit fly).